Consider the following 254-residue polypeptide: Pyruvate aldolase (254 aa).

Residue His-48 is the Proton acceptor of the active site. 2 residues coordinate a divalent metal cation: Glu-151 and Asp-177.

Belongs to the HpcH/HpaI aldolase family. A divalent metal cation serves as cofactor.

The enzyme catalyses D-glyceraldehyde + pyruvate = 2-dehydro-3-deoxy-L-galactonate. Functionally, aldolase which can catalyze in vitro the aldolisation reaction between pyruvate (PA) and D-glyceraldehyde (D-GA) to form 2-dehydro-3-deoxy-L-galactonate. The sequence is that of Pyruvate aldolase from Rhizobium etli (strain ATCC 51251 / DSM 11541 / JCM 21823 / NBRC 15573 / CFN 42).